The sequence spans 155 residues: Ribosome maturation factor RimP (155 aa).

This sequence belongs to the RimP family.

It localises to the cytoplasm. In terms of biological role, required for maturation of 30S ribosomal subunits. The sequence is that of Ribosome maturation factor RimP from Synechococcus sp. (strain RCC307).